A 247-amino-acid chain; its full sequence is Cell division protein ZapD (247 aa).

The protein belongs to the ZapD family. As to quaternary structure, interacts with FtsZ.

Its subcellular location is the cytoplasm. Functionally, cell division factor that enhances FtsZ-ring assembly. Directly interacts with FtsZ and promotes bundling of FtsZ protofilaments, with a reduction in FtsZ GTPase activity. The protein is Cell division protein ZapD of Shigella flexneri.